A 510-amino-acid polypeptide reads, in one-letter code: GMP synthase [glutamine-hydrolyzing] (510 aa).

One can recognise a Glutamine amidotransferase type-1 domain in the interval 5-195; sequence LVLVVDFGGQ…LFNVCNLKGD (191 aa). The active-site Nucleophile is C82. Catalysis depends on residues H169 and E171. The GMPS ATP-PPase domain maps to 196–385; sequence WSMSSFAEQQ…LGIPHKLVWR (190 aa). 223 to 229 provides a ligand contact to ATP; the sequence is SGGVDSS.

As to quaternary structure, homodimer.

It carries out the reaction XMP + L-glutamine + ATP + H2O = GMP + L-glutamate + AMP + diphosphate + 2 H(+). It functions in the pathway purine metabolism; GMP biosynthesis; GMP from XMP (L-Gln route): step 1/1. Catalyzes the synthesis of GMP from XMP. The sequence is that of GMP synthase [glutamine-hydrolyzing] from Clostridium botulinum (strain ATCC 19397 / Type A).